The sequence spans 105 residues: Iron-sulfur cluster assembly protein CyaY (105 aa).

This sequence belongs to the frataxin family.

Involved in iron-sulfur (Fe-S) cluster assembly. May act as a regulator of Fe-S biogenesis. The polypeptide is Iron-sulfur cluster assembly protein CyaY (Paraburkholderia phytofirmans (strain DSM 17436 / LMG 22146 / PsJN) (Burkholderia phytofirmans)).